The chain runs to 153 residues: Calmodulin-like protein 3 (153 aa).

EF-hand domains follow at residues 1 to 36, 37 to 72, 74 to 109, and 112 to 147; these read MDQA…LGIY, IPDK…IMEE, DEEE…LGLK, and RTLE…GGFA. Positions 14, 16, 18, 20, 25, 50, 52, 54, 56, 61, 87, 89, 91, 98, 125, 127, 129, 131, and 136 each coordinate Ca(2+).

This sequence belongs to the calmodulin family.

Potential calcium sensor. This is Calmodulin-like protein 3 (CML3) from Arabidopsis thaliana (Mouse-ear cress).